Here is an 841-residue protein sequence, read N- to C-terminus: DNA ligase (841 aa).

NAD(+) contacts are provided by residues 54–58 (DAEYD), 103–104 (SL), and glutamate 143. The N6-AMP-lysine intermediate role is filled by lysine 145. Positions 166, 203, 321, and 345 each coordinate NAD(+). The Zn(2+) site is built by cysteine 471, cysteine 474, cysteine 489, and cysteine 495. The tract at residues 554–575 (KTVAESDQMPSEGSSVGASGKH) is disordered. A compositionally biased stretch (polar residues) spans 561 to 570 (QMPSEGSSVG). The 78-residue stretch at 764–841 (GINKAVAGKT…SEAELLTLLG (78 aa)) folds into the BRCT domain.

Belongs to the NAD-dependent DNA ligase family. LigA subfamily. Mg(2+) is required as a cofactor. It depends on Mn(2+) as a cofactor.

The enzyme catalyses NAD(+) + (deoxyribonucleotide)n-3'-hydroxyl + 5'-phospho-(deoxyribonucleotide)m = (deoxyribonucleotide)n+m + AMP + beta-nicotinamide D-nucleotide.. DNA ligase that catalyzes the formation of phosphodiester linkages between 5'-phosphoryl and 3'-hydroxyl groups in double-stranded DNA using NAD as a coenzyme and as the energy source for the reaction. It is essential for DNA replication and repair of damaged DNA. This chain is DNA ligase, found in Neisseria meningitidis serogroup C / serotype 2a (strain ATCC 700532 / DSM 15464 / FAM18).